Here is a 253-residue protein sequence, read N- to C-terminus: DNA repair protein RecO (253 aa).

It belongs to the RecO family.

Functionally, involved in DNA repair and RecF pathway recombination. The chain is DNA repair protein RecO from Pediococcus pentosaceus (strain ATCC 25745 / CCUG 21536 / LMG 10740 / 183-1w).